The following is a 150-amino-acid chain: Troponin C, isoform 2A (150 aa).

N-acetylmethionine is present on Met1. EF-hand domains follow at residues 7 to 42 (EQIGALQKAFDSFDTDSKGFITPETVGVILRMMGVK), 43 to 78 (ISEKNLQEVIAETDEDGSGELEFEEFVELAAKFLIE), 83 to 118 (ALKTELREAFRVYDKEGNGYITTDVLKEILRELDNR), and 119 to 150 (LTEEDLDSIIEEVDEDGSGTLDFNEFMEMMNG). Ca(2+)-binding residues include Asp56, Asp58, Ser60, Glu62, and Glu67. Ca(2+) contacts are provided by Asp132, Asp134, Ser136, Thr138, and Glu143.

The protein belongs to the troponin C family.

Troponin is the central regulatory protein of striated muscle contraction. Tn consists of three components: Tn-I which is the inhibitor of actomyosin ATPase, Tn-T which contains the binding site for tropomyosin and Tn-C. The binding of calcium to Tn-C abolishes the inhibitory action of Tn on actin filaments. In Homarus americanus (American lobster), this protein is Troponin C, isoform 2A.